Reading from the N-terminus, the 793-residue chain is Signal transducer and activator of transcription 5A (793 aa).

Tyrosine 90 bears the Phosphotyrosine mark. Residue serine 128 is modified to Phosphoserine. The region spanning 589 to 686 (WNDGAILGFV…EVFAKYYTPV (98 aa)) is the SH2 domain. 2 positions are modified to phosphotyrosine: tyrosine 682 and tyrosine 694. Serine 779 is modified (phosphoserine).

This sequence belongs to the transcription factor STAT family. Forms a homodimer or a heterodimer with a related family member. Interacts with NCOA1 and SOCS7. Binds NR3C1. Interacts with ERBB4. Interacts with EBF4. Interacts with CD69. ISGylated. Post-translationally, tyrosine phosphorylated in response to KITLG/SCF, IL2, IL3, IL7, IL15, CSF2/GMCSF, GH1, PRL, EPO and THPO. Activated KIT promotes phosphorylation on tyrosine residues and subsequent translocation to the nucleus. Tyrosine phosphorylated in response to constitutively activated FGFR1, FGFR2, FGFR3 and FGFR4. Tyrosine phosphorylation is required for DNA-binding activity and dimerization. Serine phosphorylation is also required for maximal transcriptional activity. Tyrosine phosphorylated in response to signaling via activated FLT3; wild-type FLT3 results in much weaker phosphorylation than constitutively activated mutant FLT3. Alternatively, can be phosphorylated by JAK2 at Tyr-694. In the virgin, found in most tissues except brain and muscle. During lactation, abundantly found in mammary tissue, as well as in other secretory organs such as salivary gland and seminal vesicle.

The protein resides in the cytoplasm. It localises to the nucleus. Its function is as follows. Carries out a dual function: signal transduction and activation of transcription. Mediates cellular responses to the cytokine KITLG/SCF and other growth factors. May mediate cellular responses to activated FGFR1, FGFR2, FGFR3 and FGFR4. Binds to the GAS element and activates PRL-induced transcription. Regulates the expression of milk proteins during lactation. The chain is Signal transducer and activator of transcription 5A (Stat5a) from Mus musculus (Mouse).